A 469-amino-acid chain; its full sequence is NADH-quinone oxidoreductase subunit 13 (469 aa).

14 helical membrane-spanning segments follow: residues 1–21, 23–43, 47–67, 69–89, 91–111, 115–135, 144–164, 190–210, 258–278, 284–304, 308–328, 354–374, 390–410, and 430–450; these read MVVL…LGLP, ALGV…FLTH, VAHA…AFGL, GLSA…ALVA, VEGR…GLFA, LLVF…MLYL, ALYT…AAVL, AFWV…LFPL, GLLL…AFAA, LLAY…FSGT, AMGG…LFLL, LAAL…LSGF, WLAA…LTAF, and WGFA…PGYF.

This sequence belongs to the complex I subunit 4 family. NDH-1 is composed of 15 different subunits, Nqo1 to Nqo15. The complex has a L-shaped structure, with the hydrophobic arm (subunits Nqo7, Nqo8 and Nqo10 to Nqo14) embedded in the membrane and the hydrophilic peripheral arm (subunits Nqo1 to Nqo6, Nqo9 and Nqo15) protruding into the bacterial cytoplasm. The hydrophilic domain contains all the redox centers.

It is found in the cell inner membrane. The enzyme catalyses a quinone + NADH + 5 H(+)(in) = a quinol + NAD(+) + 4 H(+)(out). In terms of biological role, NDH-1 shuttles electrons from NADH, via FMN and iron-sulfur (Fe-S) centers, to quinones in the respiratory chain. The immediate electron acceptor for the enzyme in this species is menaquinone. Couples the redox reaction to proton translocation (for every two electrons transferred, four hydrogen ions are translocated across the cytoplasmic membrane), and thus conserves the redox energy in a proton gradient required for the synthesis of ATP. The protein is NADH-quinone oxidoreductase subunit 13 (nqo13) of Thermus thermophilus (strain ATCC 27634 / DSM 579 / HB8).